A 719-amino-acid polypeptide reads, in one-letter code: Polyribonucleotide nucleotidyltransferase (719 aa).

2 residues coordinate Mg(2+): Asp-507 and Asp-513. The 61-residue stretch at Pro-573–Ile-633 folds into the KH domain. The S1 motif domain maps to Gly-658–Glu-719.

This sequence belongs to the polyribonucleotide nucleotidyltransferase family. Mg(2+) serves as cofactor.

The protein resides in the cytoplasm. It catalyses the reaction RNA(n+1) + phosphate = RNA(n) + a ribonucleoside 5'-diphosphate. Its function is as follows. Involved in mRNA degradation. Catalyzes the phosphorolysis of single-stranded polyribonucleotides processively in the 3'- to 5'-direction. The chain is Polyribonucleotide nucleotidyltransferase from Campylobacter jejuni subsp. jejuni serotype O:2 (strain ATCC 700819 / NCTC 11168).